Here is an 87-residue protein sequence, read N- to C-terminus: Mitochondrial import inner membrane translocase subunit TIM8 (87 aa).

The Twin CX3C motif signature appears at 44 to 68; that stretch reads CFKKCISRVDNGNLSSQEEECLASC. Intrachain disulfides connect cysteine 44–cysteine 68 and cysteine 48–cysteine 64.

Belongs to the small Tim family. In terms of assembly, heterohexamer; composed of 3 copies of TIM8 and 3 copies of TIM13, named soluble 70 kDa complex. Associates with the TIM22 complex, whose core is composed of TIM22 and TIM54. Interacts with the transmembrane regions of multi-pass transmembrane proteins in transit.

It is found in the mitochondrion inner membrane. In terms of biological role, mitochondrial intermembrane chaperone that participates in the import and insertion of some multi-pass transmembrane proteins into the mitochondrial inner membrane. Also required for the transfer of beta-barrel precursors from the TOM complex to the sorting and assembly machinery (SAM complex) of the outer membrane. Acts as a chaperone-like protein that protects the hydrophobic precursors from aggregation and guide them through the mitochondrial intermembrane space. The TIM8-TIM13 complex is non essential and only mediates the import of few proteins, while the predominant TIM9-TIM10 70 kDa complex is crucial and mediates the import of much more proteins. This is Mitochondrial import inner membrane translocase subunit TIM8 (TIM8) from Candida glabrata (strain ATCC 2001 / BCRC 20586 / JCM 3761 / NBRC 0622 / NRRL Y-65 / CBS 138) (Yeast).